The following is a 426-amino-acid chain: MNILLSRFRLLLAAALAALSWGAQAQLSIEITGAGATRFPVAIPLFENEGSLPRGITDVVRADLERSGLFSLVDMGLVTLPATAVPDLAGVRARGADAVLAGSLYPQADGRYDVRFRLFDTQKQTELGGLSLRMTPAQNRATAHRIADFVYEKLTGQPGYFATRIAYVVKSGPRYELQIADADGMNAQTALASREPIISPAWAPDGQRLAYVSFEAKKPVVYVHTLATGQRHVVANFKGSNSAPTWAPDGQRLAVVLTKDGQSQLYVLNADGSGLRRMATSPGIDTEPAWSPDGEWIYFSSDRGGSAQIYRIPASGGSAQRVTFEGNYNVTPRLSPDGRSLAFITRNNGRFQVAVMDLATRQTTILTDSSRDESPSFAPNGRMILYATESGGRGVLAAVSSDGRVKQRLSVQAADVREPSWGPLTR.

Residues 1 to 25 (MNILLSRFRLLLAAALAALSWGAQA) form the signal peptide.

The protein belongs to the TolB family. As to quaternary structure, the Tol-Pal system is composed of five core proteins: the inner membrane proteins TolA, TolQ and TolR, the periplasmic protein TolB and the outer membrane protein Pal. They form a network linking the inner and outer membranes and the peptidoglycan layer.

It localises to the periplasm. Functionally, part of the Tol-Pal system, which plays a role in outer membrane invagination during cell division and is important for maintaining outer membrane integrity. This chain is Tol-Pal system protein TolB, found in Aromatoleum aromaticum (strain DSM 19018 / LMG 30748 / EbN1) (Azoarcus sp. (strain EbN1)).